Reading from the N-terminus, the 332-residue chain is Torsin-1A (332 aa).

An N-terminal signal peptide occupies residues 1–20 (MKLGRAVLGLLLLAPSVVQA). The tract at residues 91 to 251 (KPKKPLTLSL…VSVFNNKNSG (161 aa)) is interaction with SNAPIN. 102–109 (GWTGTGKN) is a binding site for ATP. N-linked (GlcNAc...) (high mannose) asparagine glycosylation is found at N143 and N158. An interaction with KLC1 region spans residues 251–332 (GFWHSSLIDR…FTKLDYYYDD (82 aa)). The interaction with SYNE3 stretch occupies residues 312 to 332 (RVFSDKGCKTVFTKLDYYYDD).

This sequence belongs to the ClpA/ClpB family. Torsin subfamily. As to quaternary structure, homohexamer. Interacts with TOR1B; the interaction may be specific of neural tissues. Interacts (ATP-bound) with TOR1AIP1 and TOR1AIP2; the interactions induce ATPase activity. Interacts with KLHL14; preferentially when ATP-free. Interacts with KLC1 (via TPR repeats); the interaction associates TOR1A with the kinesin oligomeric complex. Interacts with COPS4; the interaction associates TOR1A with the CSN complex. Interacts with SNAPIN; the interaction is direct and associates SNAPIN with the CSN complex. Interacts with STON2. Interacts (ATP-bound) with SYNE3 (via KASH domain); the interaction is required for SYNE3 nuclear envelope localization. Interacts with VIM; the interaction associates TOR1A with the cytoskeleton. Interacts with PLEC. Interacts (ATP-bound) with SLC6A3; regulates SLC6A3 transport to the plasma membrane. N-glycosylated. In terms of tissue distribution, widely expressed. Highest levels in kidney and liver. In the brain, high levels found in the dopaminergic neurons of the substantia nigra pars compacta, as well as in the neocortex, hippocampus and cerebellum. Also highly expressed in the spinal cord.

Its subcellular location is the endoplasmic reticulum lumen. It localises to the nucleus membrane. The protein resides in the cell projection. The protein localises to the growth cone. It is found in the cytoplasmic vesicle membrane. Its subcellular location is the cytoplasmic vesicle. It localises to the secretory vesicle. The protein resides in the synaptic vesicle. The protein localises to the cytoplasm. It is found in the cytoskeleton. It carries out the reaction ATP + H2O = ADP + phosphate + H(+). Its function is as follows. Protein with chaperone functions important for the control of protein folding, processing, stability and localization as well as for the reduction of misfolded protein aggregates. Involved in the regulation of synaptic vesicle recycling, controls STON2 protein stability in collaboration with the COP9 signalosome complex (CSN). In the nucleus, may link the cytoskeleton with the nuclear envelope, this mechanism seems to be crucial for the control of nuclear polarity, cell movement and, specifically in neurons, nuclear envelope integrity. Participates in the cellular trafficking and may regulate the subcellular location of multipass membrane proteins such as the dopamine transporter SLC6A3, leading to the modulation of dopamine neurotransmission. In the endoplasmic reticulum, plays a role in the quality control of protein folding by increasing clearance of misfolded proteins such as SGCE variants or holding them in an intermediate state for proper refolding. May have a redundant function with TOR1B in non-neural tissues. The sequence is that of Torsin-1A (TOR1A) from Homo sapiens (Human).